We begin with the raw amino-acid sequence, 35 residues long: Photosystem II reaction center protein M (35 aa).

Residues 7-27 traverse the membrane as a helical segment; the sequence is GFIATILFVLVPTVFLLILYI.

The protein belongs to the PsbM family. PSII is composed of 1 copy each of membrane proteins PsbA, PsbB, PsbC, PsbD, PsbE, PsbF, PsbH, PsbI, PsbJ, PsbK, PsbL, PsbM, PsbT, PsbX, PsbY, PsbZ, Psb30/Ycf12, peripheral proteins PsbO, CyanoQ (PsbQ), PsbU, PsbV and a large number of cofactors. It forms dimeric complexes.

Its subcellular location is the cellular thylakoid membrane. In terms of biological role, one of the components of the core complex of photosystem II (PSII). PSII is a light-driven water:plastoquinone oxidoreductase that uses light energy to abstract electrons from H(2)O, generating O(2) and a proton gradient subsequently used for ATP formation. It consists of a core antenna complex that captures photons, and an electron transfer chain that converts photonic excitation into a charge separation. This subunit is found at the monomer-monomer interface. The chain is Photosystem II reaction center protein M from Gloeothece citriformis (strain PCC 7424) (Cyanothece sp. (strain PCC 7424)).